Reading from the N-terminus, the 201-residue chain is Holliday junction branch migration complex subunit RuvA (201 aa).

The segment at 1 to 63 is domain I; it reads MYDYIKGTVT…EDNISLFGFQ (63 aa). The segment at 64–142 is domain II; it reads TTEERYLFKK…DVVASEIVYV (79 aa). The flexible linker stretch occupies residues 143 to 153; the sequence is APENDMVAGLS. Residues 153–201 form a domain III region; it reads SPQLEEAVLALEALGYSTRELKKVIPKLAKEEDLTSDAYIKLALQLMTK.

This sequence belongs to the RuvA family. In terms of assembly, homotetramer. Forms an RuvA(8)-RuvB(12)-Holliday junction (HJ) complex. HJ DNA is sandwiched between 2 RuvA tetramers; dsDNA enters through RuvA and exits via RuvB. An RuvB hexamer assembles on each DNA strand where it exits the tetramer. Each RuvB hexamer is contacted by two RuvA subunits (via domain III) on 2 adjacent RuvB subunits; this complex drives branch migration. In the full resolvosome a probable DNA-RuvA(4)-RuvB(12)-RuvC(2) complex forms which resolves the HJ.

It localises to the cytoplasm. Functionally, the RuvA-RuvB-RuvC complex processes Holliday junction (HJ) DNA during genetic recombination and DNA repair, while the RuvA-RuvB complex plays an important role in the rescue of blocked DNA replication forks via replication fork reversal (RFR). RuvA specifically binds to HJ cruciform DNA, conferring on it an open structure. The RuvB hexamer acts as an ATP-dependent pump, pulling dsDNA into and through the RuvAB complex. HJ branch migration allows RuvC to scan DNA until it finds its consensus sequence, where it cleaves and resolves the cruciform DNA. The polypeptide is Holliday junction branch migration complex subunit RuvA (Listeria monocytogenes serotype 4a (strain HCC23)).